Reading from the N-terminus, the 323-residue chain is MASIWVGHRGTVRDYPDFSPSVDAEAIQKAIRGIGTDEKMLISILTERSNAQRQLIVKEYQAAYGKELKDDLKGDLSGHFEHLMVALVTPPAVFDAKQLKKSMKGAGTNEDALIEILTTRTSRQMKDISQAYYTVYKKSLGDDISSETSGDFRKALLTLADGRRDESLKVDEHLAKQDAQILYKAGENRWGTDEDKFTEILCLRSFPQLKLTFDEYRNISQKDIVDSIKGELSGHFEDLLLAIVNCVRNTPAFLAERLHRALKGIGTDEFTLNRIMVSRSEIDLLDIRTEFKKHYGYSLYSAIKSDTSGDYEITLLKICGGDD.

N-acetylalanine is present on alanine 2. Annexin repeat units lie at residues 18–89, 90–161, 173–245, and 249–320; these read FSPS…ALVT, PPAV…TLAD, HLAK…AIVN, and NTPA…KICG. At threonine 267 the chain carries Phosphothreonine.

This sequence belongs to the annexin family.

Functionally, inhibitor of phospholipase A2, also possesses anti-coagulant properties. Also cleaves the cyclic bond of inositol 1,2-cyclic phosphate to form inositol 1-phosphate. In Homo sapiens (Human), this protein is Annexin A3 (ANXA3).